We begin with the raw amino-acid sequence, 203 residues long: Small ribosomal subunit protein uS4 (203 aa).

An S4 RNA-binding domain is found at 93–156; the sequence is QRLDNVVYRL…MKVPAILEAV (64 aa).

Belongs to the universal ribosomal protein uS4 family. As to quaternary structure, part of the 30S ribosomal subunit. Contacts protein S5. The interaction surface between S4 and S5 is involved in control of translational fidelity.

Functionally, one of the primary rRNA binding proteins, it binds directly to 16S rRNA where it nucleates assembly of the body of the 30S subunit. In terms of biological role, with S5 and S12 plays an important role in translational accuracy. The chain is Small ribosomal subunit protein uS4 from Lactococcus lactis subsp. cremoris (strain MG1363).